A 186-amino-acid polypeptide reads, in one-letter code: MTLRASLRAAVVLFGGCLLVLGLLYPLAMTGIAGVVFPVQAHGSLMYDVNGSVSGSELIARPVTDPRYFQPRPSAVSYNASASGGSNLGPTNPVFLDQVNTSIASLRDAGVTGPIPAELVMASASGLDPDLSVEAALVQAPAVAAARNSSVDEIRALVIAHRVTDLMPFHPEYVNVNTLNQALDGR.

Residues 9–29 (AAVVLFGGCLLVLGLLYPLAM) traverse the membrane as a helical segment.

Belongs to the KdpC family. The system is composed of three essential subunits: KdpA, KdpB and KdpC.

Its subcellular location is the cell membrane. In terms of biological role, part of the high-affinity ATP-driven potassium transport (or Kdp) system, which catalyzes the hydrolysis of ATP coupled with the electrogenic transport of potassium into the cytoplasm. This subunit acts as a catalytic chaperone that increases the ATP-binding affinity of the ATP-hydrolyzing subunit KdpB by the formation of a transient KdpB/KdpC/ATP ternary complex. This Methanosphaerula palustris (strain ATCC BAA-1556 / DSM 19958 / E1-9c) protein is Potassium-transporting ATPase KdpC subunit.